We begin with the raw amino-acid sequence, 260 residues long: Carbonic anhydrase 2 (260 aa).

S2 carries the post-translational modification N-acetylserine. Position 2 is a phosphoserine (S2). Residues 3-259 (HHWGYSKHNG…LKNRKIKASF (257 aa)) form the Alpha-carbonic anhydrase domain. Residue H64 is the Proton acceptor of the active site. Residue N67 is part of the active site. S87 is modified (phosphoserine). Zn(2+) contacts are provided by H94, H96, and H119. Residue Y127 is part of the active site. Residue S165 is modified to Phosphoserine. Substrate is bound at residue 198 to 199 (TT).

Belongs to the alpha-carbonic anhydrase family. As to quaternary structure, interacts with SLC4A4. Interaction with SLC4A7 regulates SLC4A7 transporter activity. Interacts with SLC26A6. It depends on Zn(2+) as a cofactor.

Its subcellular location is the cytoplasm. The protein localises to the cell membrane. The enzyme catalyses hydrogencarbonate + H(+) = CO2 + H2O. It carries out the reaction urea = cyanamide + H2O. With respect to regulation, inhibited by acetazolamide. In terms of biological role, catalyzes the reversible hydration of carbon dioxide. Can also hydrate cyanamide to urea. Involved in the regulation of fluid secretion into the anterior chamber of the eye. Essential for bone resorption and osteoclast differentiation. Contributes to intracellular pH regulation in the duodenal upper villous epithelium during proton-coupled peptide absorption. Stimulates the chloride-bicarbonate exchange activity of SLC26A6. This chain is Carbonic anhydrase 2 (Ca2), found in Mus musculus (Mouse).